A 265-amino-acid chain; its full sequence is Cytochrome c oxidase subunit 3 (265 aa).

Helical transmembrane passes span 16–36 (PWPI…VMYM), 41–61 (GGAT…FVWW), 84–104 (YGSI…FWAS), 115–135 (IGGI…IPFL), 137–157 (TPIL…ILAG), 162–182 (AVYA…FQGM), 200–220 (FFLA…FLII), and 245–265 (WHFV…WGGI).

Belongs to the cytochrome c oxidase subunit 3 family. In terms of assembly, component of the cytochrome c oxidase (complex IV, CIV), a multisubunit enzyme composed of a catalytic core of 3 subunits and several supernumerary subunits. The complex exists as a monomer or a dimer and forms supercomplexes (SCs) in the inner mitochondrial membrane with ubiquinol-cytochrome c oxidoreductase (cytochrome b-c1 complex, complex III, CIII).

The protein resides in the mitochondrion inner membrane. It carries out the reaction 4 Fe(II)-[cytochrome c] + O2 + 8 H(+)(in) = 4 Fe(III)-[cytochrome c] + 2 H2O + 4 H(+)(out). Functionally, component of the cytochrome c oxidase, the last enzyme in the mitochondrial electron transport chain which drives oxidative phosphorylation. The respiratory chain contains 3 multisubunit complexes succinate dehydrogenase (complex II, CII), ubiquinol-cytochrome c oxidoreductase (cytochrome b-c1 complex, complex III, CIII) and cytochrome c oxidase (complex IV, CIV), that cooperate to transfer electrons derived from NADH and succinate to molecular oxygen, creating an electrochemical gradient over the inner membrane that drives transmembrane transport and the ATP synthase. Cytochrome c oxidase is the component of the respiratory chain that catalyzes the reduction of oxygen to water. Electrons originating from reduced cytochrome c in the intermembrane space (IMS) are transferred via the dinuclear copper A center (CU(A)) of subunit 2 and heme A of subunit 1 to the active site in subunit 1, a binuclear center (BNC) formed by heme A3 and copper B (CU(B)). The BNC reduces molecular oxygen to 2 water molecules using 4 electrons from cytochrome c in the IMS and 4 protons from the mitochondrial matrix. The sequence is that of Cytochrome c oxidase subunit 3 (COX3) from Glycine max (Soybean).